The chain runs to 147 residues: Ribonuclease P protein component 2 (147 aa).

It belongs to the eukaryotic/archaeal RNase P protein component 2 family. Consists of a catalytic RNA component and at least 4-5 protein subunits.

Its subcellular location is the cytoplasm. The enzyme catalyses Endonucleolytic cleavage of RNA, removing 5'-extranucleotides from tRNA precursor.. Its function is as follows. Part of ribonuclease P, a protein complex that generates mature tRNA molecules by cleaving their 5'-ends. This chain is Ribonuclease P protein component 2, found in Methanocorpusculum labreanum (strain ATCC 43576 / DSM 4855 / Z).